Consider the following 525-residue polypeptide: uncharacterized protein (525 aa).

The N-terminal stretch at 1 to 21 is a signal peptide; it reads MLECLSALLVLFAGGGGSVLA. The Extracellular portion of the chain corresponds to 22–448; that stretch reads AVQSKTVADP…ISAASQLDER (427 aa). The disordered stretch occupies residues 242–264; it reads KVSSENCSKDTDDKSGSKKERNT. A helical transmembrane segment spans residues 449–469; it reads IFIFTAITVSITTLMMLGFSY. The Cytoplasmic portion of the chain corresponds to 470–525; that stretch reads RSRVSFRDHSIDDSDDDNDWSDDEVEFDEEYFYSLPVSIPEKGISLDKMAQQLGVE.

Its subcellular location is the membrane. This is an uncharacterized protein from Saccharomyces cerevisiae (strain RM11-1a) (Baker's yeast).